The following is a 290-amino-acid chain: UPF0046 protein K07C11.7 (290 aa).

The N-terminal stretch at Met1–Ala22 is a signal peptide. Asn204 carries an N-linked (GlcNAc...) asparagine glycan.

The protein belongs to the UPF0046 family.

The chain is UPF0046 protein K07C11.7 from Caenorhabditis elegans.